We begin with the raw amino-acid sequence, 243 residues long: Ubiquinone/menaquinone biosynthesis C-methyltransferase UbiE (243 aa).

Residues Thr-69, Asp-90, and 116 to 117 (DA) contribute to the S-adenosyl-L-methionine site.

It belongs to the class I-like SAM-binding methyltransferase superfamily. MenG/UbiE family.

The enzyme catalyses a 2-demethylmenaquinol + S-adenosyl-L-methionine = a menaquinol + S-adenosyl-L-homocysteine + H(+). The catalysed reaction is a 2-methoxy-6-(all-trans-polyprenyl)benzene-1,4-diol + S-adenosyl-L-methionine = a 5-methoxy-2-methyl-3-(all-trans-polyprenyl)benzene-1,4-diol + S-adenosyl-L-homocysteine + H(+). Its pathway is quinol/quinone metabolism; menaquinone biosynthesis; menaquinol from 1,4-dihydroxy-2-naphthoate: step 2/2. It participates in cofactor biosynthesis; ubiquinone biosynthesis. Its function is as follows. Methyltransferase required for the conversion of demethylmenaquinol (DMKH2) to menaquinol (MKH2) and the conversion of 2-polyprenyl-6-methoxy-1,4-benzoquinol (DDMQH2) to 2-polyprenyl-3-methyl-6-methoxy-1,4-benzoquinol (DMQH2). This chain is Ubiquinone/menaquinone biosynthesis C-methyltransferase UbiE, found in Burkholderia ambifaria (strain MC40-6).